Reading from the N-terminus, the 83-residue chain is Hepcidin (83 aa).

The N-terminal stretch at 1 to 23 is a signal peptide; that stretch reads MALSTRTQAACLLLLLLASLSST. Positions 24 to 53 are excised as a propeptide; sequence TYLHQQMRQTTELQPLHGEESRADIAIPMQ. 4 disulfides stabilise this stretch: Cys65-Cys81, Cys68-Cys71, Cys69-Cys77, and Cys72-Cys80.

Belongs to the hepcidin family. In terms of assembly, interacts with SLC40A1; this interaction promotes SLC40A1 rapid ubiquitination. Highly expressed in the liver and to a much lesser extent in the heart. Secreted in blood.

The protein localises to the secreted. Functionally, liver-produced hormone that constitutes the main circulating regulator of iron absorption and distribution across tissues. Acts by promoting endocytosis and degradation of SLC40A1, leading to the retention of iron in iron-exporting cells and decreased flow of iron into plasma. Controls the major flows of iron into plasma: absorption of dietary iron in the intestine, recycling of iron by macrophages, which phagocytose old erythrocytes and other cells, and mobilization of stored iron from hepatocytes. The sequence is that of Hepcidin (Hamp) from Mus musculus (Mouse).